We begin with the raw amino-acid sequence, 197 residues long: MLRNMVESRKTSETDIRLDLNLRGSGVYAFDTEIPFFEHMLSHIAKHGLIDMDLKLRGDIGIDCHHSVEDTAILLGQMIHTQLGDKKGIFRYGNFTLPMDEVLTTVAVDLGGRFYFKYTGPALDGKFGIYDAELTLEFLQKLALNAKMNLHVVVHYGENRHHIHESIFKALGKALRQAIAIDTSAKDQIPSTKGMLE.

This sequence belongs to the imidazoleglycerol-phosphate dehydratase family.

The protein localises to the cytoplasm. It catalyses the reaction D-erythro-1-(imidazol-4-yl)glycerol 3-phosphate = 3-(imidazol-4-yl)-2-oxopropyl phosphate + H2O. It participates in amino-acid biosynthesis; L-histidine biosynthesis; L-histidine from 5-phospho-alpha-D-ribose 1-diphosphate: step 6/9. The polypeptide is Imidazoleglycerol-phosphate dehydratase (Leptospira biflexa serovar Patoc (strain Patoc 1 / Ames)).